Reading from the N-terminus, the 1157-residue chain is Peroxisomal ATPase PEX1 (1157 aa).

Disordered regions lie at residues 187–221 and 1135–1157; these read SISS…NNGE and SGRD…STLM. A compositionally biased stretch (low complexity) spans 205-217; it reads SSTSTATGRRSVT.

The protein belongs to the AAA ATPase family. Interacts with PEX6; forming the PEX1-PEX6 AAA ATPase complex, which is composed of a heterohexamer formed by a trimer of PEX1-PEX6 dimers.

Its subcellular location is the membrane. It carries out the reaction ATP + H2O = ADP + phosphate + H(+). Component of the PEX1-PEX6 AAA ATPase complex involved in peroxisome biosynthesis. The complex acts as a protein dislocase complex that mediates the ATP-dependent extraction of the PEX5 receptor from peroxisomal membranes, an essential step for PEX5 recycling. Specifically recognizes PEX5 monoubiquitinated at 'Cys-6', and pulls it out of the peroxisome lumen through the PEX2-PEX10-PEX12 retrotranslocation channel. Extraction by the PEX1-PEX6 AAA ATPase complex is accompanied by unfolding of the TPR repeats and release of bound cargo from PEX5. The chain is Peroxisomal ATPase PEX1 from Komagataella pastoris (Yeast).